The primary structure comprises 158 residues: Small ribosomal subunit protein uS7 (158 aa).

The protein belongs to the universal ribosomal protein uS7 family. Part of the 30S ribosomal subunit. Contacts proteins S9 and S11.

In terms of biological role, one of the primary rRNA binding proteins, it binds directly to 16S rRNA where it nucleates assembly of the head domain of the 30S subunit. Is located at the subunit interface close to the decoding center, probably blocks exit of the E-site tRNA. This chain is Small ribosomal subunit protein uS7, found in Wolbachia pipientis subsp. Culex pipiens (strain wPip).